A 227-amino-acid chain; its full sequence is Cytochrome c oxidase subunit 2 (227 aa).

The Mitochondrial intermembrane segment spans residues 1 to 14 (MAYPFQLGLQDATS). The chain crosses the membrane as a helical span at residues 15–45 (PIMEELMNFHDHTLMIVFLISTLVLYIISLM). Residues 46 to 59 (LTTKLTHTSTMDAQ) are Mitochondrial matrix-facing. A helical membrane pass occupies residues 60–87 (EVETIWTILPAVILILIALPSLRILYMM). Topologically, residues 88 to 227 (DEINNPALTV…YFENWSASMI (140 aa)) are mitochondrial intermembrane. Residues histidine 161, cysteine 196, glutamate 198, cysteine 200, histidine 204, and methionine 207 each contribute to the Cu cation site. Glutamate 198 provides a ligand contact to Mg(2+). Residue tyrosine 218 is modified to Phosphotyrosine.

It belongs to the cytochrome c oxidase subunit 2 family. In terms of assembly, component of the cytochrome c oxidase (complex IV, CIV), a multisubunit enzyme composed of 14 subunits. The complex is composed of a catalytic core of 3 subunits MT-CO1, MT-CO2 and MT-CO3, encoded in the mitochondrial DNA, and 11 supernumerary subunits COX4I, COX5A, COX5B, COX6A, COX6B, COX6C, COX7A, COX7B, COX7C, COX8 and NDUFA4, which are encoded in the nuclear genome. The complex exists as a monomer or a dimer and forms supercomplexes (SCs) in the inner mitochondrial membrane with NADH-ubiquinone oxidoreductase (complex I, CI) and ubiquinol-cytochrome c oxidoreductase (cytochrome b-c1 complex, complex III, CIII), resulting in different assemblies (supercomplex SCI(1)III(2)IV(1) and megacomplex MCI(2)III(2)IV(2)). Found in a complex with TMEM177, COA6, COX18, COX20, SCO1 and SCO2. Interacts with TMEM177 in a COX20-dependent manner. Interacts with COX20. Interacts with COX16. It depends on Cu cation as a cofactor.

It localises to the mitochondrion inner membrane. It catalyses the reaction 4 Fe(II)-[cytochrome c] + O2 + 8 H(+)(in) = 4 Fe(III)-[cytochrome c] + 2 H2O + 4 H(+)(out). Component of the cytochrome c oxidase, the last enzyme in the mitochondrial electron transport chain which drives oxidative phosphorylation. The respiratory chain contains 3 multisubunit complexes succinate dehydrogenase (complex II, CII), ubiquinol-cytochrome c oxidoreductase (cytochrome b-c1 complex, complex III, CIII) and cytochrome c oxidase (complex IV, CIV), that cooperate to transfer electrons derived from NADH and succinate to molecular oxygen, creating an electrochemical gradient over the inner membrane that drives transmembrane transport and the ATP synthase. Cytochrome c oxidase is the component of the respiratory chain that catalyzes the reduction of oxygen to water. Electrons originating from reduced cytochrome c in the intermembrane space (IMS) are transferred via the dinuclear copper A center (CU(A)) of subunit 2 and heme A of subunit 1 to the active site in subunit 1, a binuclear center (BNC) formed by heme A3 and copper B (CU(B)). The BNC reduces molecular oxygen to 2 water molecules using 4 electrons from cytochrome c in the IMS and 4 protons from the mitochondrial matrix. This is Cytochrome c oxidase subunit 2 (MT-CO2) from Maxomys surifer (Indomalayan maxomys).